Reading from the N-terminus, the 1079-residue chain is Lon protease homolog, mitochondrial (1079 aa).

A mitochondrion-targeting transit peptide spans 1–60; sequence MLRPRTYVRKLAWRCPRKSQLGLRLATSVSSHKSLPLPMNFDISHSQSAFRAYQDIIHRN. The span at 61–116 shows a compositional bias: basic and acidic residues; the sequence is KSVGDDEPSQRSENENNPSESDKDSNQDPETPKKDKESENDKEPEKEKDIENDNKV. 2 disordered regions span residues 61 to 158 and 262 to 285; these read KSVG…VDPV and LTTPSSEKEAKSEEPSKEDAESFP. A compositionally biased stretch (polar residues) spans 117-131; it reads SSESNENVTLASSNT. Residues 132-143 show a composition bias toward low complexity; it reads GGAAPPNGNNNG. Positions 165–391 constitute a Lon N-terminal domain; that stretch reads LLAIPMKDRP…RALELLKVEL (227 aa). Residues 262-281 show a composition bias toward basic and acidic residues; that stretch reads LTTPSSEKEAKSEEPSKEDA. 543–550 contacts ATP; that stretch reads GPPGTGKT. Basic and acidic residues predominate over residues 756–765; sequence ALDSSKEKEG. The interval 756–832 is disordered; the sequence is ALDSSKEKEG…SEEDQQPEPK (77 aa). A compositionally biased stretch (low complexity) spans 768–779; sequence ASSEEANVNSES. Positions 780–802 are enriched in polar residues; it reads TKSNTSQAEPVAESSTDISTKSK. Residues 803–818 show a composition bias toward basic and acidic residues; it reads VASEKIETKEKKETNK. One can recognise a Lon proteolytic domain in the interval 865–1053; sequence FPPPGVATGL…QEVFDKIFPN (189 aa). Catalysis depends on residues Ser-959 and Lys-1002.

The protein belongs to the peptidase S16 family. Homohexamer or homoheptamer. Organized in a ring with a central cavity.

Its subcellular location is the mitochondrion matrix. It carries out the reaction Hydrolysis of proteins in presence of ATP.. In terms of biological role, ATP-dependent serine protease that mediates the selective degradation of misfolded, unassembled or oxidatively damaged polypeptides as well as certain short-lived regulatory proteins in the mitochondrial matrix. May also have a chaperone function in the assembly of inner membrane protein complexes. Participates in the regulation of mitochondrial gene expression and in the maintenance of the integrity of the mitochondrial genome. Binds to mitochondrial DNA in a site-specific manner. The polypeptide is Lon protease homolog, mitochondrial (Debaryomyces hansenii (strain ATCC 36239 / CBS 767 / BCRC 21394 / JCM 1990 / NBRC 0083 / IGC 2968) (Yeast)).